Here is an 844-residue protein sequence, read N- to C-terminus: Translation initiation factor IF-2 (844 aa).

A compositionally biased stretch (basic and acidic residues) spans 1-11 (MTEDVKADVPK). Disordered regions lie at residues 1-35 (MTEDVKADVPKKLSIQRRTKTTVSGTTTSGKSKAV) and 79-248 (RLEA…KGAA). Low complexity predominate over residues 21 to 33 (TTVSGTTTSGKSK). Over residues 79 to 161 (RLEAEKAATK…AAEEAKRYAE (83 aa)) the composition is skewed to basic and acidic residues. Residues 162–175 (ADDSDNESSSEDYS) are compositionally biased toward acidic residues. Residues 200 to 210 (RGKNKVAKAKK) are compositionally biased toward basic residues. Residues 211–237 (GGRDDENSKNSKNERESNRKNQKDAKF) show a composition bias toward basic and acidic residues. The region spanning 343–513 (TRAPVVTIMG…LLQSEVLELT (171 aa)) is the tr-type G domain. The tract at residues 352-359 (GHVDHGKT) is G1. 352–359 (GHVDHGKT) contacts GTP. Residues 377–381 (GITQH) are G2. The segment at 399 to 402 (DTPG) is G3. GTP contacts are provided by residues 399–403 (DTPGH) and 453–456 (NKID). The interval 453-456 (NKID) is G4. A G5 region spans residues 489–491 (SAK).

This sequence belongs to the TRAFAC class translation factor GTPase superfamily. Classic translation factor GTPase family. IF-2 subfamily.

The protein localises to the cytoplasm. Functionally, one of the essential components for the initiation of protein synthesis. Protects formylmethionyl-tRNA from spontaneous hydrolysis and promotes its binding to the 30S ribosomal subunits. Also involved in the hydrolysis of GTP during the formation of the 70S ribosomal complex. The protein is Translation initiation factor IF-2 of Haemophilus influenzae (strain PittGG).